A 427-amino-acid chain; its full sequence is Phosphoglucosamine mutase (427 aa).

Catalysis depends on Ser-94, which acts as the Phosphoserine intermediate. The Mg(2+) site is built by Ser-94, Asp-228, Asp-230, and Asp-232. At Ser-94 the chain carries Phosphoserine.

Belongs to the phosphohexose mutase family. It depends on Mg(2+) as a cofactor. Activated by phosphorylation.

The catalysed reaction is alpha-D-glucosamine 1-phosphate = D-glucosamine 6-phosphate. Its function is as follows. Catalyzes the conversion of glucosamine-6-phosphate to glucosamine-1-phosphate. The polypeptide is Phosphoglucosamine mutase (Thermotoga sp. (strain RQ2)).